The following is a 392-amino-acid chain: Ceramide phosphoethanolamine synthase (392 aa).

Over 1 to 10 (MIGPSSQISK) the chain is Lumenal. Residues 11-31 (ILLTLLFLLIIFYVFMDVELY) form a helical membrane-spanning segment. The Cytoplasmic portion of the chain corresponds to 32 to 140 (LRIHNYAIER…MFDNVIGFSR (109 aa)). The segment covering 59–82 (SESGSGSIGGSSSSSSSSSSSTST) has biased composition (low complexity). The disordered stretch occupies residues 59 to 91 (SESGSGSIGGSSSSSSSSSSSTSTKLPTAGDRQ). The helical transmembrane segment at 141–161 (STFITPNMISFFHVGVACLAG) threads the bilayer. Over 162–212 (KLVASDSLGYRRLGVLLFQIRTFLDDLDGHVARVRKHIRGERSEIGTSGYY) the chain is Lumenal. Residues 213–233 (VDGLCDGLGCIALLLGIFFYL) form a helical membrane-spanning segment. Over 234 to 271 (KNNPPRRGYSIIPMSDSKLPEPTMMIPKMKATTRKVAK) the chain is Cytoplasmic. Residues 272–288 (NVISFTGQLLLSSTAWN) form a helical membrane-spanning segment. Topologically, residues 289 to 319 (RYIAVYQNMLEREDVSGNQSHCQDYVFKSTW) are lumenal. A helical membrane pass occupies residues 320 to 340 (FFCVAWMWRIVNVHALLHCVL). Residues 341–356 (LSIFCDKLWDFLRAIR) are Cytoplasmic-facing. A helical transmembrane segment spans residues 357–377 (YSGYIILLVAICLTEMHILEA). The Lumenal portion of the chain corresponds to 378-392 (QNYIFNSTACSNISL).

The protein belongs to the CDP-alcohol phosphatidyltransferase class-I family. Mn(2+) serves as cofactor.

The protein resides in the membrane. It localises to the golgi apparatus membrane. The protein localises to the cell membrane. It catalyses the reaction CDP-ethanolamine + an N-acylsphing-4-enine = an N-acylsphing-4-enine 1-phosphoethanolamine + CMP + H(+). The enzyme catalyses CDP-ethanolamine + an N-acyl-sphingoid base = an N-acyl-sphingoid 1-phosphoethanolamine + CMP + H(+). Functionally, catalyzes the biosynthesis of ceramide phosphoethanolamine (CPE) through the transfer of a phosphatidyl head group from cytidine 5'-diphosphate (CDP)-ethanolamine on to the primary hydroxyl of ceramide. This is Ceramide phosphoethanolamine synthase from Drosophila melanogaster (Fruit fly).